Reading from the N-terminus, the 213-residue chain is Octanoyltransferase (213 aa).

The BPL/LPL catalytic domain maps to 32–207 (NSTLDEIWLV…NILALLNNPD (176 aa)). Residues 71–78 (RGGQVTYH), 138–140 (SLG), and 151–153 (GLA) contribute to the substrate site. Cys-169 serves as the catalytic Acyl-thioester intermediate.

This sequence belongs to the LipB family.

It localises to the cytoplasm. It catalyses the reaction octanoyl-[ACP] + L-lysyl-[protein] = N(6)-octanoyl-L-lysyl-[protein] + holo-[ACP] + H(+). It participates in protein modification; protein lipoylation via endogenous pathway; protein N(6)-(lipoyl)lysine from octanoyl-[acyl-carrier-protein]: step 1/2. Catalyzes the transfer of endogenously produced octanoic acid from octanoyl-acyl-carrier-protein onto the lipoyl domains of lipoate-dependent enzymes. Lipoyl-ACP can also act as a substrate although octanoyl-ACP is likely to be the physiological substrate. This chain is Octanoyltransferase, found in Shigella flexneri serotype 5b (strain 8401).